A 248-amino-acid polypeptide reads, in one-letter code: tRNA pseudouridine synthase A (248 aa).

Residue Asp-53 is the Nucleophile of the active site. Substrate is bound at residue Tyr-111.

Belongs to the tRNA pseudouridine synthase TruA family. As to quaternary structure, homodimer.

It carries out the reaction uridine(38/39/40) in tRNA = pseudouridine(38/39/40) in tRNA. Functionally, formation of pseudouridine at positions 38, 39 and 40 in the anticodon stem and loop of transfer RNAs. The sequence is that of tRNA pseudouridine synthase A from Streptococcus thermophilus (strain CNRZ 1066).